Reading from the N-terminus, the 158-residue chain is Transcriptional repressor NrdR (158 aa).

A zinc finger spans residues 3–34; that stretch reads CPYCGYPDSRVIDSRPTDDNTAIRRRRECLKC. Residues 49 to 139 form the ATP-cone domain; the sequence is ILVIKKDNRR…VYRQFKDINT (91 aa).

The protein belongs to the NrdR family. Zn(2+) is required as a cofactor.

Negatively regulates transcription of bacterial ribonucleotide reductase nrd genes and operons by binding to NrdR-boxes. This chain is Transcriptional repressor NrdR, found in Caldanaerobacter subterraneus subsp. tengcongensis (strain DSM 15242 / JCM 11007 / NBRC 100824 / MB4) (Thermoanaerobacter tengcongensis).